A 381-amino-acid polypeptide reads, in one-letter code: Queuine tRNA-ribosyltransferase (381 aa).

The active-site Proton acceptor is aspartate 103. Substrate is bound by residues 103–107, aspartate 157, glutamine 200, and glycine 227; that span reads DSGGF. The interval 258–264 is RNA binding; sequence GVGTYRE. Aspartate 277 (nucleophile) is an active-site residue. Positions 282 to 286 are RNA binding; important for wobble base 34 recognition; that stretch reads TRLAR. 4 residues coordinate Zn(2+): cysteine 315, cysteine 317, cysteine 320, and histidine 346.

This sequence belongs to the queuine tRNA-ribosyltransferase family. As to quaternary structure, homodimer. Within each dimer, one monomer is responsible for RNA recognition and catalysis, while the other monomer binds to the replacement base PreQ1. It depends on Zn(2+) as a cofactor.

The enzyme catalyses 7-aminomethyl-7-carbaguanine + guanosine(34) in tRNA = 7-aminomethyl-7-carbaguanosine(34) in tRNA + guanine. It participates in tRNA modification; tRNA-queuosine biosynthesis. In terms of biological role, catalyzes the base-exchange of a guanine (G) residue with the queuine precursor 7-aminomethyl-7-deazaguanine (PreQ1) at position 34 (anticodon wobble position) in tRNAs with GU(N) anticodons (tRNA-Asp, -Asn, -His and -Tyr). Catalysis occurs through a double-displacement mechanism. The nucleophile active site attacks the C1' of nucleotide 34 to detach the guanine base from the RNA, forming a covalent enzyme-RNA intermediate. The proton acceptor active site deprotonates the incoming PreQ1, allowing a nucleophilic attack on the C1' of the ribose to form the product. After dissociation, two additional enzymatic reactions on the tRNA convert PreQ1 to queuine (Q), resulting in the hypermodified nucleoside queuosine (7-(((4,5-cis-dihydroxy-2-cyclopenten-1-yl)amino)methyl)-7-deazaguanosine). The polypeptide is Queuine tRNA-ribosyltransferase (Cyanothece sp. (strain PCC 7425 / ATCC 29141)).